The primary structure comprises 122 residues: MILQESRMKVADNSGAREVLTIKVLGGSGRKTANIGDIVVCTVKKATPGGVVKKGDVVKAVIVRTKSGVRRKDGTYIKFDENACVIIRDDKSPRGTRIFGPVARELRDSNFMKIVSLAPEVL.

The protein belongs to the universal ribosomal protein uL14 family. As to quaternary structure, part of the 50S ribosomal subunit. Forms a cluster with proteins L3 and L19. In the 70S ribosome, L14 and L19 interact and together make contacts with the 16S rRNA in bridges B5 and B8.

Its function is as follows. Binds to 23S rRNA. Forms part of two intersubunit bridges in the 70S ribosome. This Lysinibacillus sphaericus (strain C3-41) protein is Large ribosomal subunit protein uL14.